The sequence spans 179 residues: Putative ADP-ribosylation factor-like protein 5C (179 aa).

Residue Gly2 is the site of N-myristoyl glycine attachment. GTP-binding positions include 23-30 (GLDNEGKT), 66-70 (DIVRP), and 125-128 (NKQD).

It belongs to the small GTPase superfamily. Arf family.

Functionally, binds and exchanges GTP and GDP. The chain is Putative ADP-ribosylation factor-like protein 5C (ARL5C) from Homo sapiens (Human).